The sequence spans 346 residues: Large ribosomal subunit protein uL3 (346 aa).

The tract at residues 324 to 346 (KPPKKKPPVERPQITYVSRESKQ) is disordered.

This sequence belongs to the universal ribosomal protein uL3 family. As to quaternary structure, part of the 50S ribosomal subunit. Forms a cluster with proteins L14 and L24e.

Its function is as follows. One of the primary rRNA binding proteins, it binds directly near the 3'-end of the 23S rRNA, where it nucleates assembly of the 50S subunit. The protein is Large ribosomal subunit protein uL3 of Thermococcus gammatolerans (strain DSM 15229 / JCM 11827 / EJ3).